Reading from the N-terminus, the 347-residue chain is Spermidine/putrescine import ATP-binding protein PotA (347 aa).

Residues 6–238 (LEIKNLSHYY…PKTKFVADFI (233 aa)) form the ABC transporter domain. 40–47 (GPSGCGKT) provides a ligand contact to ATP.

This sequence belongs to the ABC transporter superfamily. Spermidine/putrescine importer (TC 3.A.1.11.1) family. The complex is composed of two ATP-binding proteins (PotA), two transmembrane proteins (PotB and PotC) and a solute-binding protein (PotD).

Its subcellular location is the cell inner membrane. The catalysed reaction is ATP + H2O + polyamine-[polyamine-binding protein]Side 1 = ADP + phosphate + polyamineSide 2 + [polyamine-binding protein]Side 1.. Part of the ABC transporter complex PotABCD involved in spermidine/putrescine import. Responsible for energy coupling to the transport system. The chain is Spermidine/putrescine import ATP-binding protein PotA from Borreliella afzelii (strain PKo) (Borrelia afzelii).